The sequence spans 90 residues: Nodulation protein NolS (90 aa).

Its function is as follows. Involved in nodulation of a particular host, M.lupulina. The polypeptide is Nodulation protein NolS (nolS) (Sinorhizobium meliloti (strain Sm2011 / Rm2011 / 2011)).